The following is a 302-amino-acid chain: Lactoylglutathione lyase (302 aa).

2 VOC domains span residues 11-153 and 166-301; these read KLNH…LVSQ and RFNH…VIEQ. A Zn(2+)-binding site is contributed by H14. Position 18 (R18) interacts with substrate. A Zn(2+)-binding site is contributed by E75. Substrate contacts are provided by N79, R99, and H103. Residues H103 and E149 each coordinate Zn(2+). E149 serves as the catalytic Proton donor/acceptor.

This sequence belongs to the glyoxalase I family. Monomer. Zn(2+) is required as a cofactor. Cu(2+) serves as cofactor. Requires Ni(2+) as cofactor. It depends on Mn(2+) as a cofactor.

The enzyme catalyses (R)-S-lactoylglutathione = methylglyoxal + glutathione. It participates in secondary metabolite metabolism; methylglyoxal degradation; (R)-lactate from methylglyoxal: step 1/2. Catalyzes the conversion of hemimercaptal, formed from methylglyoxal and glutathione, to S-lactoylglutathione. The polypeptide is Lactoylglutathione lyase (glo1) (Schizosaccharomyces pombe (strain 972 / ATCC 24843) (Fission yeast)).